We begin with the raw amino-acid sequence, 451 residues long: Aspartate aminotransferase, mitochondrial (451 aa).

L-aspartate-binding residues include Gly52, Trp155, and Asn216. N6-(pyridoxal phosphate)lysine is present on Lys286. Arg423 serves as a coordination point for L-aspartate.

Belongs to the class-I pyridoxal-phosphate-dependent aminotransferase family. In terms of assembly, homodimer. Requires pyridoxal 5'-phosphate as cofactor.

The protein localises to the mitochondrion matrix. It carries out the reaction L-aspartate + 2-oxoglutarate = oxaloacetate + L-glutamate. Plays a key role in amino acid metabolism. Important for metabolite exchange between mitochondria and cytosol. This is Aspartate aminotransferase, mitochondrial (AAT1) from Saccharomyces cerevisiae (strain ATCC 204508 / S288c) (Baker's yeast).